The chain runs to 204 residues: Methyl-CpG-binding domain-containing protein 1 (204 aa).

The tract at residues 1-46 is disordered; the sequence is MLPFPAMNLKKSRSENSSVASSGSKIEEQTEKSAEPTTIKVQKKAG. Residues 15 to 24 show a composition bias toward polar residues; that stretch reads ENSSVASSGS. Residues 25 to 34 are compositionally biased toward basic and acidic residues; the sequence is KIEEQTEKSA. The segment at 49-104 adopts a CW-type zinc-finger fold; sequence GRSIDVFAVQCEKCMKWRKIDTQDEYEDIRSRVQEDPFFCKTKEGVSCEDVGDLNY. The MBD-associated domain (MAD) signature appears at 58–96; the sequence is QCEKCMKWRKIDTQDEYEDIRSRVQEDPFFCKTKEGVSC. Residues cysteine 59, cysteine 62, cysteine 88, and cysteine 96 each coordinate Zn(2+). An MBD domain is found at 110–180; the sequence is WVIDKPGLPR…GDFNFTVPKV (71 aa).

Mostly expressed in flowers and buds.

It localises to the nucleus. Its function is as follows. Probable transcriptional regulator. This chain is Methyl-CpG-binding domain-containing protein 1 (MBD1), found in Arabidopsis thaliana (Mouse-ear cress).